The following is a 92-amino-acid chain: Putative septation protein SpoVG (92 aa).

This sequence belongs to the SpoVG family.

Its function is as follows. Could be involved in septation. The chain is Putative septation protein SpoVG from Clostridioides difficile (strain 630) (Peptoclostridium difficile).